A 343-amino-acid chain; its full sequence is Probable dual-specificity RNA methyltransferase RlmN (343 aa).

E93 (proton acceptor) is an active-site residue. Residues 99-320 (TDDRATLCVS…NAKGVVCTIR (222 aa)) enclose the Radical SAM core domain. A disulfide bridge links C106 with C331. Positions 113, 117, and 120 each coordinate [4Fe-4S] cluster. Residues 158–159 (GE), S190, 212–214 (SLH), and H288 contribute to the S-adenosyl-L-methionine site. C331 (S-methylcysteine intermediate) is an active-site residue.

It belongs to the radical SAM superfamily. RlmN family. The cofactor is [4Fe-4S] cluster.

The protein localises to the cytoplasm. It carries out the reaction adenosine(2503) in 23S rRNA + 2 reduced [2Fe-2S]-[ferredoxin] + 2 S-adenosyl-L-methionine = 2-methyladenosine(2503) in 23S rRNA + 5'-deoxyadenosine + L-methionine + 2 oxidized [2Fe-2S]-[ferredoxin] + S-adenosyl-L-homocysteine. It catalyses the reaction adenosine(37) in tRNA + 2 reduced [2Fe-2S]-[ferredoxin] + 2 S-adenosyl-L-methionine = 2-methyladenosine(37) in tRNA + 5'-deoxyadenosine + L-methionine + 2 oxidized [2Fe-2S]-[ferredoxin] + S-adenosyl-L-homocysteine. In terms of biological role, specifically methylates position 2 of adenine 2503 in 23S rRNA and position 2 of adenine 37 in tRNAs. In Parabacteroides distasonis (strain ATCC 8503 / DSM 20701 / CIP 104284 / JCM 5825 / NCTC 11152), this protein is Probable dual-specificity RNA methyltransferase RlmN.